Reading from the N-terminus, the 1060-residue chain is Centrosomal protein of 131 kDa (1060 aa).

Polar residues predominate over residues 1-11 (MKGSRTITATP). The segment at 1-96 (MKGSRTITAT…TGSPRPAEPT (96 aa)) is disordered. The tract at residues 1–244 (MKGSRTITAT…SQSARGTTGL (244 aa)) is interaction with PLK4. 2 positions are modified to phosphoserine: S14 and S35. Composition is skewed to polar residues over residues 32-50 (RPGS…SVAT) and 73-88 (LRRS…SWTG). S47 is modified (phosphoserine; by MAPKAPK2). S78 is modified (phosphoserine; by MAPKAPK2 and PLK4). Phosphoserine occurs at positions 89, 105, 114, 146, and 150. Disordered stretches follow at residues 136–155 (LALP…LGPR) and 217–248 (EGGE…LRRR). Residues 217 to 226 (EGGEGSDLGK) are compositionally biased toward basic and acidic residues. In terms of domain architecture, IQ spans 263 to 283 (NQAAVTIQRWYRCQVQRRRAG). Composition is skewed to basic and acidic residues over residues 314–327 (EEAA…EKAR) and 344–363 (KASE…RAPE). Positions 314 to 437 (EEAARKKARE…VSGSSRGKAR (124 aa)) are disordered. Over residues 398 to 408 (ASESSPEQWQS) the composition is skewed to low complexity. Over residues 409-424 (PEDKPQDIHSQGEARQ) the composition is skewed to basic and acidic residues. T473 is subject to Phosphothreonine. S481 bears the Phosphoserine mark.

This sequence belongs to the CEP131 family. Self-associates. Associates with the centriolar satellite BBSome protein complex Interacts with BBS4; the interaction limits BBS4 availability for association with the BBSome complex, and hence negatively regulates ciliary localization of the BBSome complex. Interacts with MIB1. Interacts with PCM1; the interaction increases in response to ultraviolet light (UV) radiation. Associates with microtubule; association to microtubule is reduced in response to cellular stress, such as UV stimulation, in a process that requires p38 MAP kinase signaling. Interacts with CEP290, DCTN1, MAP1LC3B, PCNT, PCM1 and CEP152. Interacts with 14-3-3 proteins following UV-induced phosphorylation by MAPKAPK2; this inhibits formation of novel centriolar satellites. Interacts with SDCCAG8. Interacts with CCDC61. Interacts with PLK4. In terms of processing, ubiquitinated. Undergoes monoubiquitination catalyzed by the E3 ubiquitin-protein ligase MIB1 in proliferating cells, preventing cilia formation. Monoubiquitination by MIB1 is inhibited in response to cellular stress, such as ultraviolet light (UV) radiation or heat shock, resulting in ciliogenesis restoration. MAPKAPK2-dependent phosphorylation at Ser-47 and Ser-78 occurs in response to cellular stress such as exposure to ultraviolet irradiation and promotes binding to 14-3-3 proteins which leads to cytoplasmic sequestration of CEP131 and blocks formation of new centriolar satellites. Phosphorylation at Ser-78 mediated by PLK4 is essential for proper organization and integrity of centriolar satellites but is dispensable for its localization to centrioles and its function in ciliogenesis. Localized to the pre-acrosome region of round and elongated spermatids in testis but also present in ovary, brain and adipose tissue.

The protein resides in the cytoplasm. It is found in the cytoskeleton. It localises to the microtubule organizing center. The protein localises to the centrosome. Its subcellular location is the centriolar satellite. The protein resides in the centriole. It is found in the cilium basal body. It localises to the cytoplasmic vesicle. The protein localises to the secretory vesicle. Its subcellular location is the acrosome. Functionally, component of centriolar satellites contributing to the building of a complex and dynamic network required to regulate cilia/flagellum formation. In proliferating cells, MIB1-mediated ubiquitination induces its sequestration within centriolar satellites, precluding untimely cilia formation initiation. In contrast, during normal and ultraviolet or heat shock cellular stress-induced ciliogenesis, its non-ubiquitinated form is rapidly displaced from centriolar satellites and recruited to centrosome/basal bodies in a microtubule- and p38 MAPK-dependent manner. Also acts as a negative regulator of BBSome ciliary trafficking. Plays a role in sperm flagellar formation; may be involved in the regulation of intraflagellar transport (IFT) and/or intramanchette (IMT) trafficking, which are important for axoneme extension and/or cargo delivery to the nascent sperm tail. Required for optimal cell proliferation and cell cycle progression; may play a role in the regulation of genome stability and centriole duplication in non-ciliogenic cells. Involved in centriole duplication. Required for CEP152, WDR62 and CEP63 centrosomal localization and promotes the centrosomal localization of CDK2. Essential for maintaining proper centriolar satellite integrity. This chain is Centrosomal protein of 131 kDa (Cep131), found in Mus musculus (Mouse).